The chain runs to 458 residues: tRNA modification GTPase MnmE (458 aa).

Residues Arg28, Glu85, and Lys124 each coordinate (6S)-5-formyl-5,6,7,8-tetrahydrofolate. The 162-residue stretch at 220–381 (GMNVVIAGRP…LKEHLKAVMG (162 aa)) folds into the TrmE-type G domain. Asn230 contributes to the K(+) binding site. GTP-binding positions include 230 to 235 (NAGKSS), 249 to 255 (TDIEGTT), and 274 to 277 (DTAG). Position 234 (Ser234) interacts with Mg(2+). K(+)-binding residues include Thr249, Ile251, and Thr254. Thr255 serves as a coordination point for Mg(2+). (6S)-5-formyl-5,6,7,8-tetrahydrofolate is bound at residue Lys458.

This sequence belongs to the TRAFAC class TrmE-Era-EngA-EngB-Septin-like GTPase superfamily. TrmE GTPase family. In terms of assembly, homodimer. Heterotetramer of two MnmE and two MnmG subunits. K(+) serves as cofactor.

The protein localises to the cytoplasm. In terms of biological role, exhibits a very high intrinsic GTPase hydrolysis rate. Involved in the addition of a carboxymethylaminomethyl (cmnm) group at the wobble position (U34) of certain tRNAs, forming tRNA-cmnm(5)s(2)U34. In Chromohalobacter salexigens (strain ATCC BAA-138 / DSM 3043 / CIP 106854 / NCIMB 13768 / 1H11), this protein is tRNA modification GTPase MnmE.